A 249-amino-acid chain; its full sequence is Phosphatidylserine decarboxylase proenzyme (249 aa).

The Schiff-base intermediate with substrate; via pyruvic acid role is filled by serine 208. A Pyruvic acid (Ser); by autocatalysis modification is found at serine 208.

It belongs to the phosphatidylserine decarboxylase family. PSD-A subfamily. As to quaternary structure, heterodimer of a large membrane-associated beta subunit and a small pyruvoyl-containing alpha subunit. Pyruvate is required as a cofactor. In terms of processing, is synthesized initially as an inactive proenzyme. Formation of the active enzyme involves a self-maturation process in which the active site pyruvoyl group is generated from an internal serine residue via an autocatalytic post-translational modification. Two non-identical subunits are generated from the proenzyme in this reaction, and the pyruvate is formed at the N-terminus of the alpha chain, which is derived from the carboxyl end of the proenzyme. The post-translation cleavage follows an unusual pathway, termed non-hydrolytic serinolysis, in which the side chain hydroxyl group of the serine supplies its oxygen atom to form the C-terminus of the beta chain, while the remainder of the serine residue undergoes an oxidative deamination to produce ammonia and the pyruvoyl prosthetic group on the alpha chain.

Its subcellular location is the cell membrane. It carries out the reaction a 1,2-diacyl-sn-glycero-3-phospho-L-serine + H(+) = a 1,2-diacyl-sn-glycero-3-phosphoethanolamine + CO2. Its pathway is phospholipid metabolism; phosphatidylethanolamine biosynthesis; phosphatidylethanolamine from CDP-diacylglycerol: step 2/2. In terms of biological role, catalyzes the formation of phosphatidylethanolamine (PtdEtn) from phosphatidylserine (PtdSer). The polypeptide is Phosphatidylserine decarboxylase proenzyme (Erythrobacter litoralis (strain HTCC2594)).